The sequence spans 172 residues: Adenine phosphoribosyltransferase (172 aa).

Belongs to the purine/pyrimidine phosphoribosyltransferase family. Homodimer.

The protein resides in the cytoplasm. The catalysed reaction is AMP + diphosphate = 5-phospho-alpha-D-ribose 1-diphosphate + adenine. Its pathway is purine metabolism; AMP biosynthesis via salvage pathway; AMP from adenine: step 1/1. Its function is as follows. Catalyzes a salvage reaction resulting in the formation of AMP, that is energically less costly than de novo synthesis. This chain is Adenine phosphoribosyltransferase, found in Staphylococcus haemolyticus (strain JCSC1435).